The sequence spans 274 residues: Light-independent protochlorophyllide reductase iron-sulfur ATP-binding protein (274 aa).

Residues 12 to 17 (GIGKST) and lysine 41 each bind ATP. Serine 16 is a Mg(2+) binding site. [4Fe-4S] cluster contacts are provided by cysteine 97 and cysteine 131.

Belongs to the NifH/BchL/ChlL family. In terms of assembly, homodimer. Protochlorophyllide reductase is composed of three subunits; BchL, BchN and BchB. [4Fe-4S] cluster is required as a cofactor.

The enzyme catalyses chlorophyllide a + oxidized 2[4Fe-4S]-[ferredoxin] + 2 ADP + 2 phosphate = protochlorophyllide a + reduced 2[4Fe-4S]-[ferredoxin] + 2 ATP + 2 H2O. It participates in porphyrin-containing compound metabolism; bacteriochlorophyll biosynthesis (light-independent). In terms of biological role, component of the dark-operative protochlorophyllide reductase (DPOR) that uses Mg-ATP and reduced ferredoxin to reduce ring D of protochlorophyllide (Pchlide) to form chlorophyllide a (Chlide). This reaction is light-independent. The L component serves as a unique electron donor to the NB-component of the complex, and binds Mg-ATP. The chain is Light-independent protochlorophyllide reductase iron-sulfur ATP-binding protein from Chloroherpeton thalassium (strain ATCC 35110 / GB-78).